A 115-amino-acid polypeptide reads, in one-letter code: Large ribosomal subunit protein bL19 (115 aa).

Belongs to the bacterial ribosomal protein bL19 family.

This protein is located at the 30S-50S ribosomal subunit interface and may play a role in the structure and function of the aminoacyl-tRNA binding site. In Nitratidesulfovibrio vulgaris (strain DSM 19637 / Miyazaki F) (Desulfovibrio vulgaris), this protein is Large ribosomal subunit protein bL19.